The primary structure comprises 698 residues: Long-chain-fatty-acid--CoA ligase 1 (698 aa).

Met-1 bears the N-acetylmethionine mark. Tyr-9 carries the post-translational modification 3'-nitrotyrosine. Tyr-84 bears the Phosphotyrosine mark. O-linked (GlcNAc) serine glycosylation is present at Ser-135. An N6-acetyllysine mark is found at Lys-356 and Lys-386. Ser-620 bears the Phosphoserine mark. At Lys-632 the chain carries N6-acetyllysine.

The protein belongs to the ATP-dependent AMP-binding enzyme family. Requires Mg(2+) as cofactor.

It localises to the microsome membrane. The protein localises to the mitochondrion outer membrane. The protein resides in the peroxisome membrane. It is found in the endoplasmic reticulum membrane. The catalysed reaction is a long-chain fatty acid + ATP + CoA = a long-chain fatty acyl-CoA + AMP + diphosphate. It catalyses the reaction (5Z,8Z,11Z,14Z)-eicosatetraenoate + ATP + CoA = (5Z,8Z,11Z,14Z)-eicosatetraenoyl-CoA + AMP + diphosphate. It carries out the reaction 3,7,11,15-tetramethylhexadecanoate + ATP + CoA = phytanoyl-CoA + AMP + diphosphate. The enzyme catalyses hexadecanoate + ATP + CoA = hexadecanoyl-CoA + AMP + diphosphate. The catalysed reaction is (E)-hexadec-2-enoate + ATP + CoA = (2E)-hexadecenoyl-CoA + AMP + diphosphate. It catalyses the reaction 2,6,10,14-tetramethylpentadecanoate + ATP + CoA = pristanoyl-CoA + AMP + diphosphate. It carries out the reaction 14,15-epoxy-(5Z,8Z,11Z)-eicosatrienoate + ATP + CoA = 14,15-epoxy-(5Z,8Z,11Z)-eicosatrienoyl-CoA + AMP + diphosphate. The enzyme catalyses 5-hydroxy-(6E,8Z,11Z,14Z)-eicosatetraenoate + ATP + CoA = 5-hydroxy-(6E,8Z,11Z,14Z)-eicosatetraenoyl-CoA + AMP + diphosphate. The catalysed reaction is 12-hydroxy-(5Z,8Z,10E,14Z)-eicosatetraenoate + ATP + CoA = 12-hydroxy-(5Z,8Z,10E,14Z)-eicosatetraenoyl-CoA + AMP + diphosphate. It catalyses the reaction 15-hydroxy-(5Z,8Z,11Z,13E)-eicosatetraenoate + ATP + CoA = 15-hydroxy-(5Z,8Z,11Z,13E)-eicosatetraenoyl-CoA + AMP + diphosphate. It carries out the reaction (9Z)-octadecenoate + ATP + CoA = (9Z)-octadecenoyl-CoA + AMP + diphosphate. Inhibited at high temperature and by arachidonate. In terms of biological role, catalyzes the conversion of long-chain fatty acids to their active form acyl-CoAs for both synthesis of cellular lipids, and degradation via beta-oxidation. Preferentially uses palmitoleate, oleate and linoleate. Preferentially activates arachidonate than epoxyeicosatrienoic acids (EETs) or hydroxyeicosatrienoic acids (HETEs). The protein is Long-chain-fatty-acid--CoA ligase 1 of Cavia porcellus (Guinea pig).